A 253-amino-acid polypeptide reads, in one-letter code: MNAIILAAGFGSRLMPLTKDQPKCMVEYKNKKIIDYEIEALKSAGINEIAVVGGYLNDVLKNYLNKYDIEHFFINSKYDKTNMVHTFFCAKDFMLKCIEEKQDLIISYADIVYFQDCVQKLINAKEELAIVVDKSWCKLWSKRFANPLEDAETLKMTNGYIIELGKKANAYDEIEAQYIGLFKFSYQFLSEVIAFYEMLDRDILYDNKNFENMYMTSFLQALIEKYNNAKAVEIDGNWCEIDFMSDLEVQIEK.

It catalyses the reaction N(5)-phospho-L-glutamine + CTP + H(+) = N(5)-(cytidine 5'-diphosphoramidyl)-L-glutamine + diphosphate. The protein operates within capsule biogenesis; capsule polysaccharide biosynthesis. Functionally, involved in the biosynthesis of the O-methyl phosphoramidate (MeOPN) group found on the capsular polysaccharide (CPS) of C.jejuni. Catalyzes the formation of CDP-L-glutamine from CTP and L-glutamine phosphate. In the presence of MnCTP, catalyzes the displacement of pyrophosphate from CTP using phosphoramidate, methyl phosphate, methyl phosphonate, phosphate, arsenate, ethanolamine phosphate, (R/S)-glycerol-1-phosphate, glycerol-2-phosphate, serinol phosphate, L-serine phosphate and 3-phospho-D-glycerate as substrate in addition to L-glutamine phosphate. This is CTP:phosphoglutamine cytidylyltransferase from Campylobacter jejuni subsp. jejuni serotype O:2 (strain ATCC 700819 / NCTC 11168).